Reading from the N-terminus, the 80-residue chain is Large ribosomal subunit protein bL31 (80 aa).

The Zn(2+) site is built by C16, C18, C36, and C39.

Belongs to the bacterial ribosomal protein bL31 family. Type A subfamily. In terms of assembly, part of the 50S ribosomal subunit. Zn(2+) serves as cofactor.

Its function is as follows. Binds the 23S rRNA. The polypeptide is Large ribosomal subunit protein bL31 (Methylacidiphilum infernorum (isolate V4) (Methylokorus infernorum (strain V4))).